The following is a 283-amino-acid chain: Cuticle collagen 49 (283 aa).

The signal sequence occupies residues 1 to 19 (MWKFVIGSVSTAAFFVSVC). Positions 90-283 (EPTKNCPAGP…GYCTCPPRTA (194 aa)) are disordered. The segment covering 127-139 (VVIHDMPNPKECI) has biased composition (basic and acidic residues). A compositionally biased stretch (pro residues) spans 143-155 (AGPPGPPGPPGPL). A compositionally biased stretch (low complexity) spans 185–204 (QGPPGSAGRAGPRGQAGQPG). Residues 213 to 271 (GRPGPQGPLGEPGAQGEPGVDGKDGALGAPGRKAENGRPGKRGKDGVAGVPGTRGKEGE) enclose the Collagen-like domain. Residues 244-257 (RKAENGRPGKRGKD) are compositionally biased toward basic and acidic residues.

It belongs to the cuticular collagen family. In terms of assembly, collagen polypeptide chains are complexed within the cuticle by disulfide bonds and other types of covalent cross-links.

Its function is as follows. Probable cuticular collagen-like protein. Nematode cuticles are composed largely of collagen-like proteins. The cuticle functions both as an exoskeleton and as a barrier to protect the worm from its environment. Acts downstream of the Wnt signaling pathway, perhaps in the formation of the adult cuticle. The sequence is that of Cuticle collagen 49 from Caenorhabditis elegans.